Reading from the N-terminus, the 294-residue chain is Ribosomal RNA small subunit methyltransferase H (294 aa).

Residues 40–42, Asp-59, Phe-86, Asp-102, and Gln-109 each bind S-adenosyl-L-methionine; that span reads GGH.

The protein belongs to the methyltransferase superfamily. RsmH family.

The protein localises to the cytoplasm. It catalyses the reaction cytidine(1402) in 16S rRNA + S-adenosyl-L-methionine = N(4)-methylcytidine(1402) in 16S rRNA + S-adenosyl-L-homocysteine + H(+). Its function is as follows. Specifically methylates the N4 position of cytidine in position 1402 (C1402) of 16S rRNA. This Cyanothece sp. (strain PCC 7425 / ATCC 29141) protein is Ribosomal RNA small subunit methyltransferase H.